The sequence spans 375 residues: Nicotinate-nucleotide--dimethylbenzimidazole phosphoribosyltransferase (375 aa).

Residue glutamate 323 is the Proton acceptor of the active site. A disordered region spans residues 344–375 (LPEKPEELEAGEGPEAAEESSPEPENPEALAE). Residues 351 to 375 (LEAGEGPEAAEESSPEPENPEALAE) are compositionally biased toward acidic residues.

It belongs to the CobT family.

It catalyses the reaction 5,6-dimethylbenzimidazole + nicotinate beta-D-ribonucleotide = alpha-ribazole 5'-phosphate + nicotinate + H(+). It functions in the pathway nucleoside biosynthesis; alpha-ribazole biosynthesis; alpha-ribazole from 5,6-dimethylbenzimidazole: step 1/2. Catalyzes the synthesis of alpha-ribazole-5'-phosphate from nicotinate mononucleotide (NAMN) and 5,6-dimethylbenzimidazole (DMB). The protein is Nicotinate-nucleotide--dimethylbenzimidazole phosphoribosyltransferase of Streptomyces avermitilis (strain ATCC 31267 / DSM 46492 / JCM 5070 / NBRC 14893 / NCIMB 12804 / NRRL 8165 / MA-4680).